The sequence spans 112 residues: Nucleoid-associated protein FTW_0607 (112 aa).

The segment at 1-27 (MNFDMSKLMQQAQKMQEQMKKAQQERE) is disordered. Residues 17 to 27 (EQMKKAQQERE) show a composition bias toward basic and acidic residues.

The protein belongs to the YbaB/EbfC family. As to quaternary structure, homodimer.

Its subcellular location is the cytoplasm. It localises to the nucleoid. Functionally, binds to DNA and alters its conformation. May be involved in regulation of gene expression, nucleoid organization and DNA protection. The protein is Nucleoid-associated protein FTW_0607 of Francisella tularensis subsp. tularensis (strain WY96-3418).